The following is a 142-amino-acid chain: EEEIGCTSGWVPFDGRCYGFFPQELSWRRAESFCQRLGARTHLVSIHNEEEHQAIISMLASSQPYSDSEEQEANGDVWIGLRLSLRRLWEWSDGTKLDYGSWYRDVLPRRRACAALEDTADFASWDVELCSDRKPFICAYRT.

3 disulfide bridges follow: C6–C17, C34–C138, and C113–C130. Residues 13-139 (FDGRCYGFFP…CSDRKPFICA (127 aa)) enclose the C-type lectin domain. Residues S62 and S68 each carry the phosphoserine modification.

In terms of processing, a minor form with some unmodified Ser-68 and partial phosphorylation of Ser-66 may also occur.

The protein localises to the secreted. It localises to the extracellular space. It is found in the extracellular matrix. The chain is Dromaiocalcin-2 from Dromaius novaehollandiae (Emu).